We begin with the raw amino-acid sequence, 190 residues long: Remorin (190 aa).

The span at 1-12 (MAEEQKTSKVDV) shows a compositional bias: basic and acidic residues. Disordered stretches follow at residues 1–45 (MAEE…VESK) and 50–69 (VEKP…SADR). S14 is modified (phosphoserine). T58 is subject to Phosphothreonine. The stretch at 92–147 (EKSKAENRAQKKISDVHAWENSKKAAVEAQLRKIEEKLEKKKAQYGEKMKNKVAAI) forms a coiled coil.

This sequence belongs to the remorin family. As to quaternary structure, may polymerize to form filamentous structures. As to expression, expressed in roots, leaves, stems, flowers and siliques, with a maximal expression in apical regions.

Functionally, exhibits a non sequence-specific DNA-binding activity. The protein is Remorin (DBP) of Arabidopsis thaliana (Mouse-ear cress).